We begin with the raw amino-acid sequence, 64 residues long: Non-structural protein 3b (64 aa).

This is Non-structural protein 3b from Avian infectious bronchitis virus (strain M41) (IBV).